The primary structure comprises 260 residues: Ava biosynthesis cluster protein M (260 aa).

The first 15 residues, 1–15, serve as a signal peptide directing secretion; it reads MKVLVLGLCRTGTSS.

It belongs to the cytochrome P450 family.

It participates in secondary metabolite biosynthesis. Its function is as follows. Part of the cluster that mediates the biosynthesis of a highly modified cyclo-arginine-tryptophan dipeptide (cRW). The first step of the pathway is perfornmed by the arginine-containing cyclodipeptide synthase (RCPDS) avaA that acts as the scaffold-generating enzyme and is responsible for formation of the cyclo-Arg-Trp (cRW) diketopiperazine. AvaB then acts as a multifunctional flavoenzyme that is responsible for generating the cyclo-Arg-formylkynurenine DKP, which can be deformylated by avaC. AvaB then further catalyzes an additional N-oxidation followed by cyclization and dehydration. The next step is an N-acetylation of the guanidine group catalyzed by the arginine N-acetyltransferase avaD. The roles of the additional enzymes identified within the ava cluster still have to be determined. The polypeptide is Ava biosynthesis cluster protein M (Aspergillus versicolor).